We begin with the raw amino-acid sequence, 257 residues long: NAD-dependent protein deacetylase (257 aa).

Residues 3–252 (NGECLEGGRK…DLVLNEVKGI (250 aa)) form the Deacetylase sirtuin-type domain. The NAD(+) site is built by A29, T33, F40, R41, Q105, I107, D108, and H123. F40 lines the nicotinamide pocket. Nicotinamide-binding residues include I107 and D108. H123 acts as the Proton acceptor in catalysis. The Zn(2+) site is built by C131, C134, C156, and C159. NAD(+)-binding residues include S195, S196, and N220.

Belongs to the sirtuin family. Class U subfamily. Zn(2+) is required as a cofactor.

Its subcellular location is the cytoplasm. The enzyme catalyses N(6)-acetyl-L-lysyl-[protein] + NAD(+) + H2O = 2''-O-acetyl-ADP-D-ribose + nicotinamide + L-lysyl-[protein]. Its function is as follows. NAD-dependent protein deacetylase which modulates the activities of several enzymes which are inactive in their acetylated form. Deacetylates the N-terminal lysine residue of Alba, the major archaeal chromatin protein and that, in turn, increases Alba's DNA binding affinity, thereby repressing transcription. The protein is NAD-dependent protein deacetylase of Caldivirga maquilingensis (strain ATCC 700844 / DSM 13496 / JCM 10307 / IC-167).